A 569-amino-acid chain; its full sequence is Estrogen receptor (569 aa).

Positions 1–151 are modulating; that stretch reads MYPKEEHSAG…GFDSGKETRF (151 aa). Polar residues predominate over residues 28 to 37; sequence PTQTFGTSSP. Residues 28 to 65 are disordered; that stretch reads PTQTFGTSSPAEPASVGYYPAPPDPHEEHLQTLGGGSS. NR C4-type zinc fingers lie at residues 152-172 and 188-212; these read CAVCSDYASGYHYGVWSCEGC and CPATNQCTIDRNRRKSCQACRLRKC. A DNA-binding region (nuclear receptor) is located at residues 152 to 217; that stretch reads CAVCSDYASG…RLRKCYEVGM (66 aa). The segment at 218-278 is hinge; that stretch reads MKGGIRKDRG…SGGVVSTLCM (61 aa). Residues 223 to 271 form a disordered region; it reads RKDRGGRSVRRERRRSSNEDRDKSSSDQCSRAGVRTTGPQDKRKKRSGG. Basic and acidic residues predominate over residues 237-247; sequence RSSNEDRDKSS. The 237-residue stretch at 279–515 folds into the NR LBD domain; it reads SPDQVLLLLL…DLLLEMLDAQ (237 aa). Positions 523–532 are enriched in polar residues; sequence VQRVWSQSEK. Residues 523–569 form a disordered region; it reads VQRVWSQSEKNPPSTPTTSSSSSNNSPRGGAAAIQSNGACHSHSPDP. Residues 538–549 show a composition bias toward low complexity; sequence PTTSSSSSNNSP.

The protein belongs to the nuclear hormone receptor family. NR3 subfamily. As to quaternary structure, binds DNA as a homodimer. Can form a heterodimer with ER-beta.

The protein resides in the nucleus. Its function is as follows. The steroid hormones and their receptors are involved in the regulation of eukaryotic gene expression and affect cellular proliferation and differentiation in target tissues. The protein is Estrogen receptor (esr1) of Danio rerio (Zebrafish).